A 491-amino-acid chain; its full sequence is Ketol-acid reductoisomerase (NADP(+)) (491 aa).

In terms of domain architecture, KARI N-terminal Rossmann spans Leu14–Ser208. NADP(+) contacts are provided by residues Cys45–Gln48, Arg68, and Ser78. Residue His132 is part of the active site. Gly158 serves as a coordination point for NADP(+). KARI C-terminal knotted domains are found at residues Ser209–Asn344 and Tyr345–Met485. Mg(2+) contacts are provided by Asp217, Glu221, Glu389, and Glu393. Ser414 is a substrate binding site.

Belongs to the ketol-acid reductoisomerase family. The cofactor is Mg(2+).

The catalysed reaction is (2R)-2,3-dihydroxy-3-methylbutanoate + NADP(+) = (2S)-2-acetolactate + NADPH + H(+). The enzyme catalyses (2R,3R)-2,3-dihydroxy-3-methylpentanoate + NADP(+) = (S)-2-ethyl-2-hydroxy-3-oxobutanoate + NADPH + H(+). Its pathway is amino-acid biosynthesis; L-isoleucine biosynthesis; L-isoleucine from 2-oxobutanoate: step 2/4. It participates in amino-acid biosynthesis; L-valine biosynthesis; L-valine from pyruvate: step 2/4. Its function is as follows. Involved in the biosynthesis of branched-chain amino acids (BCAA). Catalyzes an alkyl-migration followed by a ketol-acid reduction of (S)-2-acetolactate (S2AL) to yield (R)-2,3-dihydroxy-isovalerate. In the isomerase reaction, S2AL is rearranged via a Mg-dependent methyl migration to produce 3-hydroxy-3-methyl-2-ketobutyrate (HMKB). In the reductase reaction, this 2-ketoacid undergoes a metal-dependent reduction by NADPH to yield (R)-2,3-dihydroxy-isovalerate. This is Ketol-acid reductoisomerase (NADP(+)) from Blochmanniella pennsylvanica (strain BPEN).